The following is a 399-amino-acid chain: Ribonuclease T2-like 1-A (399 aa).

A signal peptide spans 1–17; sequence MLSILSIAALLIATVQA. 5 cysteine pairs are disulfide-bonded: Cys-24-Cys-43, Cys-32-Cys-79, Cys-42-Cys-150, Cys-87-Cys-142, and Cys-214-Cys-249. Active-site residues include His-72, Glu-135, and His-139. The segment at 259–279 is disordered; that stretch reads KGNSGANTLTTKTTGTTTSGS. Residues 262–279 show a composition bias toward low complexity; the sequence is SGANTLTTKTTGTTTSGS. N-linked (GlcNAc...) asparagine glycosylation occurs at Asn-291.

It belongs to the RNase T2 family.

The protein localises to the vacuole lumen. The protein resides in the cytoplasm. It carries out the reaction a ribonucleotidyl-ribonucleotide-RNA + H2O = a 3'-end 3'-phospho-ribonucleotide-RNA + a 5'-end dephospho-ribonucleoside-RNA + H(+). Functionally, rnase which modulates cell survival under stress conditions. Released from the vacuole to the cytoplasm during stress to promote tRNA and rRNA cleavage and to activate separately a downstream pathway that promotes cell death. Involved in cell size, vacuolar morphology and growth at high temperatures and high salt concentration. The protein is Ribonuclease T2-like 1-A (RNY1-A) of Candida albicans (strain SC5314 / ATCC MYA-2876) (Yeast).